An 83-amino-acid chain; its full sequence is Large ribosomal subunit protein bL28 (83 aa).

The protein belongs to the bacterial ribosomal protein bL28 family.

The polypeptide is Large ribosomal subunit protein bL28 (Amoebophilus asiaticus (strain 5a2)).